Here is a 250-residue protein sequence, read N- to C-terminus: Cell division protein ZapD (250 aa).

Belongs to the ZapD family. As to quaternary structure, interacts with FtsZ.

It localises to the cytoplasm. Functionally, cell division factor that enhances FtsZ-ring assembly. Directly interacts with FtsZ and promotes bundling of FtsZ protofilaments, with a reduction in FtsZ GTPase activity. The polypeptide is Cell division protein ZapD (Bordetella petrii (strain ATCC BAA-461 / DSM 12804 / CCUG 43448)).